The chain runs to 421 residues: E3 ubiquitin protein ligase DRIP1 (421 aa).

The RING-type zinc-finger motif lies at 16–57 (CSICDNILRDATTISECLHTFCRKCIYEKITEDEIETCPVCN). Polar residues-rich tracts occupy residues 106 to 121 (ISSLVVSTPMVSAQAG) and 157 to 172 (ESTSSPDTLNKFTQNK). Disordered regions lie at residues 106 to 198 (ISSL…WDSK) and 216 to 307 (PLKS…QERR). Basic and acidic residues predominate over residues 178-198 (SCKESISNKENKDGDEPWDSK). A compositionally biased stretch (low complexity) spans 218–227 (KSSASQGSGS). Over residues 244-253 (TKTKNKKRKC) the composition is skewed to basic residues. The span at 262–271 (NGDPTTSETV) shows a compositional bias: polar residues. A compositionally biased stretch (basic residues) spans 274 to 284 (KRMRTTQRKRS). A compositionally biased stretch (polar residues) spans 285–294 (ATTLGDSRNL).

Interacts with DREB2A. In terms of processing, autoubiquitinated. As to expression, expressed in roots, leaves and flowers.

It localises to the nucleus. It carries out the reaction S-ubiquitinyl-[E2 ubiquitin-conjugating enzyme]-L-cysteine + [acceptor protein]-L-lysine = [E2 ubiquitin-conjugating enzyme]-L-cysteine + N(6)-ubiquitinyl-[acceptor protein]-L-lysine.. It participates in protein modification; protein ubiquitination. Its function is as follows. E3 ubiquitin-protein ligase that acts as a negative regulator of the response to water stress. Mediates ubiquitination and subsequent proteasomal degradation of the drought-induced transcriptional activator DREB2A. Functionally redundant with DRIP2. This Arabidopsis thaliana (Mouse-ear cress) protein is E3 ubiquitin protein ligase DRIP1 (DRIP1).